The chain runs to 393 residues: MTNSNRIKLTWISFLSYALTGALVIVTGMVMGNIADYFNLPVSSMSNTFTFLNAGILISIFLNAWLMEIVPLKTQLRFGFLLMVLAVAGLMFSHSLALFSAAMFILGVVSGITMSIGTFLVTQMYEGRQRGSRLLFTDSFFSMAGMIFPMIAAFLLARSIEWYWVYACIGLVYVAIFILTFGCEFPALGKHAPKTDAPVEKEKWGIGVLFLSVAALCYILGQLGFISWVPEYAKGLGMSLNDAGTLVSNFWMSYMVGMWAFSFILRFFDLQRILTVLAGLAAILMYVFNTGTPAYMAWSILALGFFSSAIYTTIITLGSQQTKVPSPKLVNFVLTCGTIGTMLTFVVTGPIVEHSGPQAALLTANGLYAVVFVMCFLLGFVSRHRQHNTLTSH.

12 helical membrane-spanning segments follow: residues 11 to 31 (WISFLSYALTGALVIVTGMVM), 51 to 71 (FLNAGILISIFLNAWLMEIVP), 78 to 98 (FGFLLMVLAVAGLMFSHSLAL), 101 to 121 (AAMFILGVVSGITMSIGTFLV), 134 to 154 (LLFTDSFFSMAGMIFPMIAAF), 162 to 182 (WYWVYACIGLVYVAIFILTFG), 206 to 226 (IGVLFLSVAALCYILGQLGFI), 245 to 265 (TLVSNFWMSYMVGMWAFSFIL), 273 to 293 (ILTVLAGLAAILMYVFNTGTP), 297 to 317 (AWSILALGFFSSAIYTTIITL), 332 to 352 (FVLTCGTIGTMLTFVVTGPIV), and 361 to 381 (LLTANGLYAVVFVMCFLLGFV).

This sequence belongs to the major facilitator superfamily. TsgA family.

It localises to the cell inner membrane. This is Protein TsgA from Escherichia coli O6:K15:H31 (strain 536 / UPEC).